A 563-amino-acid polypeptide reads, in one-letter code: Arginine--tRNA ligase (563 aa).

The short motif at 122 to 132 (PNIAKPMSMGH) is the 'HIGH' region element.

The protein belongs to the class-I aminoacyl-tRNA synthetase family. As to quaternary structure, monomer.

Its subcellular location is the cytoplasm. The enzyme catalyses tRNA(Arg) + L-arginine + ATP = L-arginyl-tRNA(Arg) + AMP + diphosphate. The protein is Arginine--tRNA ligase of Levilactobacillus brevis (strain ATCC 367 / BCRC 12310 / CIP 105137 / JCM 1170 / LMG 11437 / NCIMB 947 / NCTC 947) (Lactobacillus brevis).